We begin with the raw amino-acid sequence, 198 residues long: Patulin synthesis protein F (198 aa).

Positions Met-1–Ala-18 are cleaved as a signal peptide. 2 N-linked (GlcNAc...) asparagine glycosylation sites follow: Asn-128 and Asn-184.

Belongs to the patF family.

It is found in the cytoplasm. The protein localises to the cytosol. The catalysed reaction is phyllostine = neopatulin. It functions in the pathway mycotoxin biosynthesis; patulin biosynthesis. In terms of biological role, part of the gene cluster that mediates the biosynthesis of patulin, an acetate-derived tetraketide mycotoxin produced by several fungal species that shows antimicrobial properties against several bacteria. PatF catalyzes the conversion of phyllostine into neopatulin. The pathway begins with the synthesis of 6-methylsalicylic acid by the polyketide synthase (PKS) patK via condensation of acetate and malonate units. The 6-methylsalicylic acid decarboxylase patG then catalyzes the decarboxylation of 6-methylsalicylic acid to yield m-cresol (also known as 3-methylphenol). These first reactions occur in the cytosol. The intermediate m-cresol is then transported into the endoplasmic reticulum where the cytochrome P450 monooxygenase patH converts it to m-hydroxybenzyl alcohol, which is further converted to gentisyl alcohol by the cytochrome P450 monooxygenase patI. The oxidoreductases patJ and patO further convert gentisyl alcohol to isoepoxydon in the vacuole. PatN catalyzes then the transformation of isoepoxydon into phyllostine. The cluster protein patF is responsible for the conversion from phyllostine to neopatulin whereas the alcohol dehydrogenase patD converts neopatulin to E-ascladiol. The steps between isoepoxydon and E-ascladiol occur in the cytosol, and E-ascladiol is probably secreted to the extracellular space by one of the cluster-specific transporters patC or patM. Finally, the secreted patulin synthase patE catalyzes the conversion of E-ascladiol to patulin. This is Patulin synthesis protein F from Aspergillus clavatus (strain ATCC 1007 / CBS 513.65 / DSM 816 / NCTC 3887 / NRRL 1 / QM 1276 / 107).